The primary structure comprises 353 residues: Pleckstrin-2 (353 aa).

Met-1 carries the N-acetylmethionine modification. One can recognise a PH 1 domain in the interval 4-104 (GVLKEGFLVK…WAFEITGAIH (101 aa)). Position 120 is a phosphoserine (Ser-120). In terms of domain architecture, DEP spans 139-225 (TSTGIRPSPN…DSTALYTFAE (87 aa)). Residues 247-353 (TVVKQGYLSK…EWIEAIKKLT (107 aa)) enclose the PH 2 domain.

In terms of tissue distribution, ubiquitous. Most abundant in the thymus, large bowel, small bowel, stomach, and prostate.

Its subcellular location is the cell projection. It localises to the lamellipodium membrane. The protein resides in the cytoplasm. It is found in the cytoskeleton. Functionally, may help orchestrate cytoskeletal arrangement. Contribute to lamellipodia formation. Overexpression of pleckstrin 2 causes large lamellipodia and peripheral ruffle formation. The chain is Pleckstrin-2 (Plek2) from Mus musculus (Mouse).